The chain runs to 721 residues: MDAVIAPRHEDCRDAERRAEPLPANAPLSMPVQSLLQSPQAAAVRSPAAWRRALIMVATAVLSAAGIYEMYQVLQVGGITVLEGVVLVLFAALFAWVALSFVSALAGFTVLCCGWRDDVGIMPDGSMPAVSSKIAMLLPTYNEDAPVVFARLQATRQSVDETGRGAQFDWFVLSDSTDPSVWIDEERCYAELAATHDRLYYRHRPYNTARKSGNIADWVERFGGAYDFMVILDADSVMTGDVLVRIAAAMETNSDVGLIQTLPVVVQARTLFARVQQFAGSIYGPMIAAGTAWWHGSESNYWGHNAIIRVSAFAGSAGLPTLAGRKPFGGEILSHDFVEAALMRRGGWRIHLAPTLRGSYEECPPSLLDFAARDRRWCQGNLQHGKLLTARGLHWVSRLHFLTGIGAYLTAPMWLAFLVAGILISLQAQFVRPEYFPKDFSLFPIWPAQDPVRAAWVFAGTMGLLILPKLLALLLVLIRSQTRRRFGGGLRTFGGVLLETMISALTAPVMMVFQSTAVIEILLGRDAGWQVQHRGDGAIPLREVVRRYALPTALGATMAVGAWLVSWPLLLWMTPVIVGLLLAIPVALLTTRVSRSRPLLMTTPEQIDPPAILAQVHALADRLRPANQTTDPLSALCSDRRLRELHLAALAFHPPRRRGRIDPHLATARVLIDDAESYSEAAGWLGPREIRAVLGDRETLQRLLKLSGEHAQLAVGSEPSG.

The next 7 helical transmembrane spans lie at 54–74, 85–105, 404–424, 458–478, 493–513, 548–568, and 569–589; these read LIMV…YQVL, VVLV…VSAL, GIGA…GILI, FAGT…LVLI, FGGV…MMVF, YALP…VSWP, and LLLW…VALL.

It belongs to the glycosyltransferase 2 family. OpgH subfamily.

The protein resides in the cell inner membrane. It functions in the pathway glycan metabolism; osmoregulated periplasmic glucan (OPG) biosynthesis. In terms of biological role, involved in the biosynthesis of osmoregulated periplasmic glucans (OPGs). The polypeptide is Glucans biosynthesis glucosyltransferase H (Rhodopseudomonas palustris (strain TIE-1)).